We begin with the raw amino-acid sequence, 176 residues long: Large ribosomal subunit protein uL6 (176 aa).

Belongs to the universal ribosomal protein uL6 family. As to quaternary structure, part of the 50S ribosomal subunit.

Functionally, this protein binds to the 23S rRNA, and is important in its secondary structure. It is located near the subunit interface in the base of the L7/L12 stalk, and near the tRNA binding site of the peptidyltransferase center. This chain is Large ribosomal subunit protein uL6, found in Burkholderia mallei (strain NCTC 10247).